The primary structure comprises 320 residues: Aspartate carbamoyltransferase catalytic subunit (320 aa).

Positions 70 and 71 each coordinate carbamoyl phosphate. Lys98 provides a ligand contact to L-aspartate. Residues Arg120, His149, and Gln152 each contribute to the carbamoyl phosphate site. Positions 182 and 237 each coordinate L-aspartate. Carbamoyl phosphate is bound by residues Gly278 and Pro279.

The protein belongs to the aspartate/ornithine carbamoyltransferase superfamily. ATCase family. In terms of assembly, heterododecamer (2C3:3R2) of six catalytic PyrB chains organized as two trimers (C3), and six regulatory PyrI chains organized as three dimers (R2).

It carries out the reaction carbamoyl phosphate + L-aspartate = N-carbamoyl-L-aspartate + phosphate + H(+). Its pathway is pyrimidine metabolism; UMP biosynthesis via de novo pathway; (S)-dihydroorotate from bicarbonate: step 2/3. Its function is as follows. Catalyzes the condensation of carbamoyl phosphate and aspartate to form carbamoyl aspartate and inorganic phosphate, the committed step in the de novo pyrimidine nucleotide biosynthesis pathway. The protein is Aspartate carbamoyltransferase catalytic subunit of Vesicomyosocius okutanii subsp. Calyptogena okutanii (strain HA).